Consider the following 445-residue polypeptide: UPF0210 protein SPT_0285 (445 aa).

Belongs to the UPF0210 family. As to quaternary structure, homodimer.

The sequence is that of UPF0210 protein SPT_0285 from Streptococcus pneumoniae (strain Taiwan19F-14).